Here is a 251-residue protein sequence, read N- to C-terminus: Methionine aminopeptidase (251 aa).

Histidine 77 serves as a coordination point for substrate. Residues aspartate 94, aspartate 105, and histidine 169 each coordinate a divalent metal cation. Histidine 176 is a substrate binding site. A divalent metal cation is bound by residues glutamate 202 and glutamate 233.

This sequence belongs to the peptidase M24A family. Methionine aminopeptidase type 1 subfamily. In terms of assembly, monomer. Requires Co(2+) as cofactor. The cofactor is Zn(2+). It depends on Mn(2+) as a cofactor. Fe(2+) is required as a cofactor.

The enzyme catalyses Release of N-terminal amino acids, preferentially methionine, from peptides and arylamides.. In terms of biological role, removes the N-terminal methionine from nascent proteins. The N-terminal methionine is often cleaved when the second residue in the primary sequence is small and uncharged (Met-Ala-, Cys, Gly, Pro, Ser, Thr, or Val). Requires deformylation of the N(alpha)-formylated initiator methionine before it can be hydrolyzed. The chain is Methionine aminopeptidase from Mycoplasma capricolum subsp. capricolum (strain California kid / ATCC 27343 / NCTC 10154).